We begin with the raw amino-acid sequence, 327 residues long: GMP reductase (327 aa).

C175 functions as the Thioimidate intermediate in the catalytic mechanism. 204-227 (IIADGGIRTHGDIAKSIRFGASMV) contributes to the NADP(+) binding site.

The protein belongs to the IMPDH/GMPR family. GuaC type 2 subfamily.

The catalysed reaction is IMP + NH4(+) + NADP(+) = GMP + NADPH + 2 H(+). Catalyzes the irreversible NADPH-dependent deamination of GMP to IMP. It functions in the conversion of nucleobase, nucleoside and nucleotide derivatives of G to A nucleotides, and in maintaining the intracellular balance of A and G nucleotides. The sequence is that of GMP reductase from Exiguobacterium sp. (strain ATCC BAA-1283 / AT1b).